Here is a 119-residue protein sequence, read N- to C-terminus: Ribonuclease P protein component (119 aa).

The protein belongs to the RnpA family. As to quaternary structure, consists of a catalytic RNA component (M1 or rnpB) and a protein subunit.

The enzyme catalyses Endonucleolytic cleavage of RNA, removing 5'-extranucleotides from tRNA precursor.. Its function is as follows. RNaseP catalyzes the removal of the 5'-leader sequence from pre-tRNA to produce the mature 5'-terminus. It can also cleave other RNA substrates such as 4.5S RNA. The protein component plays an auxiliary but essential role in vivo by binding to the 5'-leader sequence and broadening the substrate specificity of the ribozyme. The sequence is that of Ribonuclease P protein component from Streptococcus pyogenes serotype M5 (strain Manfredo).